The sequence spans 77 residues: MAKVCQVTGKKPMVGNNVSHANNKTKRRFLPNLQNRRFWVESENRWISLRLTNAGLRVIDKNGIDAVLSDLRARGEI.

This sequence belongs to the bacterial ribosomal protein bL28 family.

The chain is Large ribosomal subunit protein bL28 from Polynucleobacter asymbioticus (strain DSM 18221 / CIP 109841 / QLW-P1DMWA-1) (Polynucleobacter necessarius subsp. asymbioticus).